Consider the following 725-residue polypeptide: Catalase B (725 aa).

The signal sequence occupies residues 1–15 (MRALSLASLIGIASA). The propeptide occupies 16–27 (ACPYMTGELERR). Asn-50 carries N-linked (GlcNAc...) asparagine glycosylation. The active site involves His-101. An N-linked (GlcNAc...) asparagine glycan is attached at Asn-119. The active site involves Asn-174. Position 388 (Tyr-388) interacts with heme. Asn-447, Asn-550, and Asn-645 each carry an N-linked (GlcNAc...) asparagine glycan.

The protein belongs to the catalase family. In terms of assembly, homotetramer. The cofactor is heme.

The protein resides in the secreted. The catalysed reaction is 2 H2O2 = O2 + 2 H2O. Functionally, occurs in almost all aerobically respiring organisms and serves to protect cells from the toxic effects of hydrogen peroxide through its degradation into water and oxygen. This chain is Catalase B (catB), found in Aspergillus oryzae (strain ATCC 42149 / RIB 40) (Yellow koji mold).